Reading from the N-terminus, the 233-residue chain is Triosephosphate isomerase (233 aa).

Substrate is bound at residue 8 to 10 (NWK). H91 acts as the Electrophile in catalysis. Residue E155 is the Proton acceptor of the active site. Positions 161 and 192 each coordinate substrate.

This sequence belongs to the triosephosphate isomerase family. Homodimer.

Its subcellular location is the cytoplasm. The catalysed reaction is D-glyceraldehyde 3-phosphate = dihydroxyacetone phosphate. It functions in the pathway carbohydrate biosynthesis; gluconeogenesis. Its pathway is carbohydrate degradation; glycolysis; D-glyceraldehyde 3-phosphate from glycerone phosphate: step 1/1. Functionally, involved in the gluconeogenesis. Catalyzes stereospecifically the conversion of dihydroxyacetone phosphate (DHAP) to D-glyceraldehyde-3-phosphate (G3P). This chain is Triosephosphate isomerase, found in Wolbachia sp. subsp. Brugia malayi (strain TRS).